The following is a 59-amino-acid chain: Large ribosomal subunit protein uL30 (59 aa).

Belongs to the universal ribosomal protein uL30 family. Part of the 50S ribosomal subunit.

The sequence is that of Large ribosomal subunit protein uL30 from Geobacter metallireducens (strain ATCC 53774 / DSM 7210 / GS-15).